A 180-amino-acid chain; its full sequence is NAD(P)H-quinone oxidoreductase subunit I, chloroplastic (180 aa).

4Fe-4S ferredoxin-type domains lie at glycine 55–arginine 84 and leucine 95–glutamate 124. The [4Fe-4S] cluster site is built by cysteine 64, cysteine 67, cysteine 70, cysteine 74, cysteine 104, cysteine 107, cysteine 110, and cysteine 114.

The protein belongs to the complex I 23 kDa subunit family. NDH is composed of at least 16 different subunits, 5 of which are encoded in the nucleus. The cofactor is [4Fe-4S] cluster.

The protein localises to the plastid. It is found in the chloroplast thylakoid membrane. It catalyses the reaction a plastoquinone + NADH + (n+1) H(+)(in) = a plastoquinol + NAD(+) + n H(+)(out). It carries out the reaction a plastoquinone + NADPH + (n+1) H(+)(in) = a plastoquinol + NADP(+) + n H(+)(out). NDH shuttles electrons from NAD(P)H:plastoquinone, via FMN and iron-sulfur (Fe-S) centers, to quinones in the photosynthetic chain and possibly in a chloroplast respiratory chain. The immediate electron acceptor for the enzyme in this species is believed to be plastoquinone. Couples the redox reaction to proton translocation, and thus conserves the redox energy in a proton gradient. The sequence is that of NAD(P)H-quinone oxidoreductase subunit I, chloroplastic from Chloranthus spicatus (Chulantree).